Reading from the N-terminus, the 896-residue chain is DNA mismatch repair protein MutS (896 aa).

607–614 (GPNMSGKS) is an ATP binding site. The segment at 809-835 (ANSVAPNTAASMPVEAADESQPVESET) is disordered.

It belongs to the DNA mismatch repair MutS family.

Functionally, this protein is involved in the repair of mismatches in DNA. It is possible that it carries out the mismatch recognition step. This protein has a weak ATPase activity. This chain is DNA mismatch repair protein MutS, found in Lactiplantibacillus plantarum (strain ATCC BAA-793 / NCIMB 8826 / WCFS1) (Lactobacillus plantarum).